A 273-amino-acid polypeptide reads, in one-letter code: 4-hydroxy-tetrahydrodipicolinate reductase (273 aa).

NAD(+)-binding positions include 12 to 17 (GAGGRM) and glutamate 38. Arginine 39 lines the NADP(+) pocket. NAD(+) contacts are provided by residues 102-104 (GTT) and 126-129 (AANF). Catalysis depends on histidine 159, which acts as the Proton donor/acceptor. Histidine 160 contacts (S)-2,3,4,5-tetrahydrodipicolinate. Lysine 163 serves as the catalytic Proton donor. A (S)-2,3,4,5-tetrahydrodipicolinate-binding site is contributed by 169 to 170 (GT).

This sequence belongs to the DapB family. As to quaternary structure, homotetramer.

It localises to the cytoplasm. It carries out the reaction (S)-2,3,4,5-tetrahydrodipicolinate + NAD(+) + H2O = (2S,4S)-4-hydroxy-2,3,4,5-tetrahydrodipicolinate + NADH + H(+). The enzyme catalyses (S)-2,3,4,5-tetrahydrodipicolinate + NADP(+) + H2O = (2S,4S)-4-hydroxy-2,3,4,5-tetrahydrodipicolinate + NADPH + H(+). The protein operates within amino-acid biosynthesis; L-lysine biosynthesis via DAP pathway; (S)-tetrahydrodipicolinate from L-aspartate: step 4/4. Functionally, catalyzes the conversion of 4-hydroxy-tetrahydrodipicolinate (HTPA) to tetrahydrodipicolinate. In Salmonella agona (strain SL483), this protein is 4-hydroxy-tetrahydrodipicolinate reductase.